A 163-amino-acid polypeptide reads, in one-letter code: MADPSFDVVSKIDRQEVDNALNQAAKELANRFDFRGTGTRIQWSGEEAITLESETEERCKAAIDVFKEKLIKRGISLKAFDVGEPASSGRVYKVTGKLVQGIAQDVAKKISKKIRDEGPKGVQAQIQGDQLRVSGKKKDDLQTVIQLLKSSDFDVALQFENYR.

It belongs to the YajQ family.

Nucleotide-binding protein. This Saccharopolyspora erythraea (strain ATCC 11635 / DSM 40517 / JCM 4748 / NBRC 13426 / NCIMB 8594 / NRRL 2338) protein is Nucleotide-binding protein SACE_6882.